Consider the following 409-residue polypeptide: Isovaleryl-CoA dehydrogenase, mitochondrial (409 aa).

The transit peptide at 1 to 22 (MAAAQRWLPGILRRGDGLARRL) directs the protein to the mitochondrion. Residues 151 to 160 (LAMSEPNSGS) and 184 to 186 (WCT) contribute to the FAD site. Residue Ser-160 participates in substrate binding. Substrate is bound by residues 206 to 207 (SK), Tyr-261, and 268 to 271 (DLER). Glu-270 functions as the Proton acceptor in the catalytic mechanism. Residues Arg-296, Gln-307, and 364–368 (QCLGG) contribute to the FAD site. Substrate is bound at residue 391-392 (AG). 393–395 (TSE) contributes to the FAD binding site.

This sequence belongs to the acyl-CoA dehydrogenase family. As to quaternary structure, homodimer. It depends on FAD as a cofactor.

The protein localises to the mitochondrion. The catalysed reaction is 3-methylbutanoyl-CoA + oxidized [electron-transfer flavoprotein] + H(+) = 3-methylbut-2-enoyl-CoA + reduced [electron-transfer flavoprotein]. It functions in the pathway amino-acid degradation; L-leucine degradation; (S)-3-hydroxy-3-methylglutaryl-CoA from 3-isovaleryl-CoA: step 1/3. The sequence is that of Isovaleryl-CoA dehydrogenase, mitochondrial from Oryza sativa subsp. japonica (Rice).